We begin with the raw amino-acid sequence, 202 residues long: Small ribosomal subunit protein uS4c (202 aa).

The S4 RNA-binding domain maps to 90–153; sequence MRLDNVIFRL…KSETIISKNI (64 aa).

Belongs to the universal ribosomal protein uS4 family. Part of the 30S ribosomal subunit. Contacts protein S5. The interaction surface between S4 and S5 is involved in control of translational fidelity.

The protein resides in the plastid. The protein localises to the chloroplast. Its function is as follows. One of the primary rRNA binding proteins, it binds directly to 16S rRNA where it nucleates assembly of the body of the 30S subunit. In terms of biological role, with S5 and S12 plays an important role in translational accuracy. This is Small ribosomal subunit protein uS4c (rps4) from Hylocomium splendens (Glittering wood-moss).